The primary structure comprises 139 residues: MAPKAAEKKPSTGGKAPAGGKAPAEKKEAGKKTAASGEKKKRTKARKETYSSYIYKVLKQVHPDTGISNRAMSILNSFVNDIFERVATEASKLAAYNKKSTISSREIQTSVRLILPGELAKHAVSEGTKAVTKYSSSAK.

The segment covering 1–10 (MAPKAAEKKP) has biased composition (basic and acidic residues). A disordered region spans residues 1–47 (MAPKAAEKKPSTGGKAPAGGKAPAEKKEAGKKTAASGEKKKRTKARK). Residues Lys-8 and Lys-9 each carry the N6-acetyllysine; alternate modification. Residues Lys-8 and Lys-9 each participate in a glycyl lysine isopeptide (Lys-Gly) (interchain with G-Cter in SUMO); alternate cross-link. A compositionally biased stretch (low complexity) spans 11-22 (STGGKAPAGGKA). Lys-15 carries the post-translational modification N6-acetyllysine. Lys-26 is subject to N6-acetyllysine; alternate. Residue Lys-26 forms a Glycyl lysine isopeptide (Lys-Gly) (interchain with G-Cter in SUMO); alternate linkage. Residue Lys-27 forms a Glycyl lysine isopeptide (Lys-Gly) (interchain with G-Cter in SUMO) linkage. Lys-133 is covalently cross-linked (Glycyl lysine isopeptide (Lys-Gly) (interchain with G-Cter in ubiquitin)).

It belongs to the histone H2B family. The nucleosome is a histone octamer containing two molecules each of H2A, H2B, H3 and H4 assembled in one H3-H4 heterotetramer and two H2A-H2B heterodimers. The octamer wraps approximately 147 bp of DNA. Post-translationally, monoubiquitinated by the UBC2-BRE1 complex to form H2BK123ub1. H2BK123ub1 gives a specific tag for epigenetic transcriptional activation and is also prerequisite for H3K4me and H3K79me formation. H2BK123ub1 also modulates the formation of double-strand breaks during meiosis and is a prerequisite for DNA-damage checkpoint activation. Acetylated by GCN5 to form H2BK11ac and H2BK16ac. H2BK16ac can also be formed by ESA1. Acetylation of N-terminal lysines and particularly formation of H2BK11acK16ac has a positive effect on transcription. In terms of processing, sumoylation to form H2BK6su or H2BK7su, and probably also H2BK16su or H2BK17su, occurs preferentially near the telomeres and represses gene transcription.

It is found in the nucleus. Its subcellular location is the chromosome. Core component of nucleosome. Nucleosomes wrap and compact DNA into chromatin, limiting DNA accessibility to the cellular machineries which require DNA as a template. Histones thereby play a central role in transcription regulation, DNA repair, DNA replication and chromosomal stability. DNA accessibility is regulated via a complex set of post-translational modifications of histones, also called histone code, and nucleosome remodeling. This chain is Histone H2B (HTB1), found in Coccidioides immitis (strain RS) (Valley fever fungus).